We begin with the raw amino-acid sequence, 98 residues long: Acylphosphatase (98 aa).

The 87-residue stretch at 10–96 (ARLLRIRGRV…TDGAGFDCLP (87 aa)) folds into the Acylphosphatase-like domain. Active-site residues include Arg25 and Asn43.

It belongs to the acylphosphatase family.

The enzyme catalyses an acyl phosphate + H2O = a carboxylate + phosphate + H(+). The polypeptide is Acylphosphatase (acyP) (Azoarcus sp. (strain BH72)).